The primary structure comprises 261 residues: UPF0246 protein azo1887 (261 aa).

This sequence belongs to the UPF0246 family.

The protein is UPF0246 protein azo1887 of Azoarcus sp. (strain BH72).